The sequence spans 459 residues: tRNA modification GTPase MnmE (459 aa).

3 residues coordinate (6S)-5-formyl-5,6,7,8-tetrahydrofolate: Arg23, Glu88, and Arg127. The TrmE-type G domain occupies 223 to 381 (GLSVVIVGKP…IKNCIKELFF (159 aa)). Asn233 contacts K(+). Residues 233–238 (NVGKSS), 252–258 (TDIPGTT), and 277–280 (DTAG) each bind GTP. Ser237 is a binding site for Mg(2+). K(+) is bound by residues Thr252, Ile254, and Thr257. A Mg(2+)-binding site is contributed by Thr258. Lys459 is a binding site for (6S)-5-formyl-5,6,7,8-tetrahydrofolate.

The protein belongs to the TRAFAC class TrmE-Era-EngA-EngB-Septin-like GTPase superfamily. TrmE GTPase family. As to quaternary structure, homodimer. Heterotetramer of two MnmE and two MnmG subunits. It depends on K(+) as a cofactor.

The protein resides in the cytoplasm. Functionally, exhibits a very high intrinsic GTPase hydrolysis rate. Involved in the addition of a carboxymethylaminomethyl (cmnm) group at the wobble position (U34) of certain tRNAs, forming tRNA-cmnm(5)s(2)U34. This Clostridium kluyveri (strain ATCC 8527 / DSM 555 / NBRC 12016 / NCIMB 10680 / K1) protein is tRNA modification GTPase MnmE.